Here is a 122-residue protein sequence, read N- to C-terminus: Large ribosomal subunit protein uL14 (122 aa).

The protein belongs to the universal ribosomal protein uL14 family. Part of the 50S ribosomal subunit. Forms a cluster with proteins L3 and L19. In the 70S ribosome, L14 and L19 interact and together make contacts with the 16S rRNA in bridges B5 and B8.

Its function is as follows. Binds to 23S rRNA. Forms part of two intersubunit bridges in the 70S ribosome. The polypeptide is Large ribosomal subunit protein uL14 (Lactobacillus delbrueckii subsp. bulgaricus (strain ATCC 11842 / DSM 20081 / BCRC 10696 / JCM 1002 / NBRC 13953 / NCIMB 11778 / NCTC 12712 / WDCM 00102 / Lb 14)).